The primary structure comprises 28 residues: Apolipoprotein C-I (28 aa).

It belongs to the apolipoprotein C1 family.

The protein resides in the secreted. Its function is as follows. Inhibitor of lipoprotein binding to the low density lipoprotein (LDL) receptor, LDL receptor-related protein, and very low density lipoprotein (VLDL) receptor. Associates with high density lipoproteins (HDL) and the triacylglycerol-rich lipoproteins in the plasma and makes up about 10% of the protein of the VLDL and 2% of that of HDL. Appears to interfere directly with fatty acid uptake and is also the major plasma inhibitor of cholesteryl ester transfer protein (CETP). Binds free fatty acids and reduces their intracellular esterification. Modulates the interaction of APOE with beta-migrating VLDL and inhibits binding of beta-VLDL to the LDL receptor-related protein. The chain is Apolipoprotein C-I (APOC1) from Oryctolagus cuniculus (Rabbit).